Here is a 252-residue protein sequence, read N- to C-terminus: Carbonic anhydrase (252 aa).

Positions 1–26 are cleaved as a signal peptide; that stretch reads MPRFPRTLPRLTAVLLLACTAFSAAA. The 222-residue stretch at 31–252 folds into the Alpha-carbonic anhydrase domain; sequence THWGYTGHDS…QPLNARVVIE (222 aa). A disulfide bridge links Cys-54 with Cys-207. His-92 (proton acceptor) is an active-site residue. Zn(2+) is bound by residues His-118, His-120, and His-137. Residue 203–204 participates in substrate binding; that stretch reads TT.

Belongs to the alpha-carbonic anhydrase family. Homodimer. Zn(2+) is required as a cofactor.

The protein localises to the periplasm. It catalyses the reaction hydrogencarbonate + H(+) = CO2 + H2O. Its function is as follows. Reversible hydration of carbon dioxide. The chain is Carbonic anhydrase (cah) from Neisseria gonorrhoeae.